A 251-amino-acid chain; its full sequence is Hydroxyacylglutathione hydrolase (251 aa).

Zn(2+) is bound by residues His53, His55, Asp57, His58, His110, Asp127, and His165.

It belongs to the metallo-beta-lactamase superfamily. Glyoxalase II family. In terms of assembly, monomer. It depends on Zn(2+) as a cofactor.

The catalysed reaction is an S-(2-hydroxyacyl)glutathione + H2O = a 2-hydroxy carboxylate + glutathione + H(+). Its pathway is secondary metabolite metabolism; methylglyoxal degradation; (R)-lactate from methylglyoxal: step 2/2. Functionally, thiolesterase that catalyzes the hydrolysis of S-D-lactoyl-glutathione to form glutathione and D-lactic acid. The polypeptide is Hydroxyacylglutathione hydrolase (Escherichia coli (strain UTI89 / UPEC)).